The primary structure comprises 561 residues: Proline--tRNA ligase (561 aa).

It belongs to the class-II aminoacyl-tRNA synthetase family. ProS type 1 subfamily. Homodimer.

Its subcellular location is the cytoplasm. It catalyses the reaction tRNA(Pro) + L-proline + ATP = L-prolyl-tRNA(Pro) + AMP + diphosphate. Its function is as follows. Catalyzes the attachment of proline to tRNA(Pro) in a two-step reaction: proline is first activated by ATP to form Pro-AMP and then transferred to the acceptor end of tRNA(Pro). As ProRS can inadvertently accommodate and process non-cognate amino acids such as alanine and cysteine, to avoid such errors it has two additional distinct editing activities against alanine. One activity is designated as 'pretransfer' editing and involves the tRNA(Pro)-independent hydrolysis of activated Ala-AMP. The other activity is designated 'posttransfer' editing and involves deacylation of mischarged Ala-tRNA(Pro). The misacylated Cys-tRNA(Pro) is not edited by ProRS. This chain is Proline--tRNA ligase, found in Thermosipho africanus (strain TCF52B).